An 898-amino-acid chain; its full sequence is MQPTDPTKFTEQAWDAIVKSQEVARRYKNTNLEVEHILLALLEQDMGLAARIFQRAAVDGEGLRQQLEIFTNRQPKQAYVEQLYLGRSLDVMLDRADAARSSWEDKFISVEHLLVGFAEDDRVGRKTLRAFNLDPQDLELAIKAIRGSQKVTEPNQEEKYEALDKYGRDLTEQARQGKLDPVIGRDEEIRRVIQVLSRRSKNNPVLIGEPGVGKTAIAEGLAQRIINGDVPESLKNRQLISLDMGSLIAGAKYRGEFEERLRSVMKEVTNSDGQIILFIDEVHTVVGAGGREGSGSMDAGNLLKPMLARGELRCIGATTLDEYRKNIEKDPALERRFQQVYVKQPSVDDTISILRGLKEKYEVHHGVKITDSALVAAATLSHRYIQDRFLPDKAIDLVDEAAARLKMEITSKPVELEDIDRRLMQLQMEKLSLEGEEKRPGLGADKSSKERLEKIQQEITELEGQQQELSGQWLSEKQMLEEINTLKEKEQELRLQVEKAERATDWEKAAKIKYGELEVLQHDIEEKESKLLEIQGSGNTLLREQVTESDIAEIVAGWTGIPMNRLMETERQKLLQLEGHLHQRVIGQKEAVAAVSAAIRRARAGMKDPSRPIGSFLFMGPTGVGKTELARALAGFLFDSEEAMVRIDMSEYMEKHAVSRLIGAPPGYVGYEEGGQLSEAVRRRPYSVVLLDEVEKAHLDVFNILLQVLDDGRITDSQGRVVDFRNTIIVMTSNIGSDHILSLSADDADYDKMQKQVLQSLRKHFRPEFLNRIDDLIIFHTLKRDELRRIVVLQIKRIEKLLDEQKITLSLSDAALDHIVSAGYDPTYGARPLKRAIQRQLENPIATKILENTFVAGDKILIDCVDGQLIFDKEIEPTTLPEEPEENITAVEVEVLSS.

Residues 6-148 enclose the Clp R domain; the sequence is PTKFTEQAWD…ELAIKAIRGS (143 aa). 2 repeat regions span residues 9 to 74 and 85 to 148; these read FTEQ…TNRQ and LGRS…IRGS. The NBD1 stretch occupies residues 161 to 344; it reads EALDKYGRDL…RRFQQVYVKQ (184 aa). Residue 208–215 coordinates ATP; it reads GEPGVGKT. The interval 345–560 is linker; it reads PSVDDTISIL…IAEIVAGWTG (216 aa). A coiled-coil region spans residues 395–536; it reads IDLVDEAAAR…KESKLLEIQG (142 aa). Residues 570–781 form an NBD2 region; sequence ERQKLLQLEG…RIDDLIIFHT (212 aa). 620–627 provides a ligand contact to ATP; it reads GPTGVGKT. Positions 782-898 are C-terminal; the sequence is LKRDELRRIV…TAVEVEVLSS (117 aa).

Belongs to the ClpA/ClpB family. In terms of assembly, homohexamer. The oligomerization is ATP-dependent.

It localises to the cytoplasm. Its function is as follows. Part of a stress-induced multi-chaperone system, it is involved in the recovery of the cell from heat-induced damage, in cooperation with DnaK, DnaJ and GrpE. Acts before DnaK, in the processing of protein aggregates. Protein binding stimulates the ATPase activity; ATP hydrolysis unfolds the denatured protein aggregates, which probably helps expose new hydrophobic binding sites on the surface of ClpB-bound aggregates, contributing to the solubilization and refolding of denatured protein aggregates by DnaK. The polypeptide is Chaperone protein ClpB 1 (clpB1) (Synechocystis sp. (strain ATCC 27184 / PCC 6803 / Kazusa)).